A 168-amino-acid chain; its full sequence is Gremlin-2 (168 aa).

The N-terminal stretch at 1–21 (MFWKLSLTLLLVAVLVKVAET) is a signal peptide. An N-linked (GlcNAc...) asparagine glycan is attached at asparagine 40. 4 cysteine pairs are disulfide-bonded: cysteine 73–cysteine 123, cysteine 87–cysteine 137, cysteine 97–cysteine 155, and cysteine 101–cysteine 157. One can recognise a CTCK domain in the interval 73-163 (CKTQPLRQTV…HCRCMSVNLS (91 aa)). The N-linked (GlcNAc...) asparagine glycan is linked to asparagine 161.

This sequence belongs to the DAN family. As to quaternary structure, homodimer. Interacts with BMP2, BMP4 and BMP7, but has lower affinity for BMP7 than for BMP2 and BMP4. Binds heparin; this impairs the interaction with BMP2. In terms of processing, N-glycosylated. In terms of tissue distribution, highly expressed in the ovary, followed by brain, spleen, colon, kidney and uterus. In ovary expressed in granulosa cells of selective early antral follicles.

It localises to the secreted. Its function is as follows. Cytokine that inhibits the activity of BMP2 and BMP4 in a dose-dependent manner, and thereby modulates signaling by BMP family members. Contributes to the regulation of embryonic morphogenesis via BMP family members. Antagonizes BMP4-induced suppression of progesterone production in granulosa cells. In Mus musculus (Mouse), this protein is Gremlin-2 (Grem2).